The following is a 690-amino-acid chain: MGSSGLGKAATLDELLCTCIEMFDDNGELDNSYLPRIVLLMHRWYLSSTELAEKLLCMYRNATGESCNEFRLKICYFMRYWILKFPAEFNLDLGLIRMTEEFREVASQLGYEKHVSLIDISSIPSYDWMRRVTQRKKVSKKGKACLLFDHLEPIELAEHLTFLEHKSFRRISFTDYQSYVIHGCLENNPTLERSIALFNGISKWVQLMVLSKPTPQQRAEVITKFINVAKKLLQLKNFNTLMAVVGGLSHSSISRLKETHSHLSSEVTKNWNEMTELVSSNGNYCNYRKAFADCDGFKIPILGVHLKDLIAVHVIFPDWTEENKVNIVKMHQLSVTLSELVSLQNASHHLEPNMDLINLLTLSLDLYHTEDDIYKLSLVLEPRNSKSQPTSPTTPNKPVVPLEWALGVMPKPDPTVINKHIRKLVESVFRNYDHDHDGYISQEDFESIAANFPFLDSFCVLDKDQDGLISKDEMMAYFLRAKSQLHCKMGPGFIHNFQEMTYLKPTFCEHCAGFLWGIIKQGYKCKDCGANCHKQCKDLLVLACRRFARAPSLSSGHGSLPGSPSLPPAQDEVFEFPGVTAGHRDLDSRAITLVTGSSRKISVRLQRATTSQATQTEPVWSEAGWGDSGSHTFPKMKSKFHDKAAKDKGFAKWENEKPRVHAGVDVVDRGTEFELDQDEGEETRQDGEDG.

Residues 3–125 form the N-terminal Ras-GEF domain; the sequence is SSGLGKAATL…SLIDISSIPS (123 aa). Positions 152 to 383 constitute a Ras-GEF domain; it reads EPIELAEHLT…YKLSLVLEPR (232 aa). EF-hand domains are found at residues 420–455 and 458–484; these read HIRK…FPFL and FCVL…AKSQ. Ca(2+)-binding residues include Asp-433, Asp-435, Asp-437, Tyr-439, Asp-444, Asp-462, Asp-464, Asp-466, and Glu-473. The segment at 494 to 544 adopts a Phorbol-ester/DAG-type zinc-finger fold; sequence IHNFQEMTYLKPTFCEHCAGFLWGIIKQGYKCKDCGANCHKQCKDLLVLAC. The interval 667-690 is disordered; the sequence is VDRGTEFELDQDEGEETRQDGEDG.

It belongs to the RASGRP family.

Guanine nucleotide exchange factor (GEF) for Ras and Rap1. The chain is Ras guanyl-releasing protein 3 (RASGRP3) from Homo sapiens (Human).